Here is a 149-residue protein sequence, read N- to C-terminus: Oligosaccharyltransferase complex subunit ostc (149 aa).

The Cytoplasmic segment spans residues 1–32 (METLFSLPFTVLECPNVKLKKPSWLHMPSAMT). A helical transmembrane segment spans residues 33–53 (VYAVVIVSYFLITGGIIYDVI). The Extracellular portion of the chain corresponds to 54 to 83 (VEPPSVGSMTDEHGHQRPVAFLAYRVNGQY). The helical transmembrane segment at 84-104 (IMEGLASSFLFTMGGLGFIIL) threads the bilayer. Residues 105-117 (DRSNAPNIPKLNR) are Cytoplasmic-facing. The helical transmembrane segment at 118–138 (FLLLFIGFVSVLLSFFMARVF) threads the bilayer. Residues 139–149 (MRMKLPGYLMG) lie on the Extracellular side of the membrane.

The protein belongs to the OSTC family. Specific component of the STT3A-containing form of the oligosaccharyltransferase (OST) complex.

Its subcellular location is the membrane. It functions in the pathway protein modification; protein glycosylation. Functionally, specific component of the STT3A-containing form of the oligosaccharyl transferase (OST) complex that catalyzes the initial transfer of a defined glycan (Glc(3)Man(9)GlcNAc(2) in eukaryotes) from the lipid carrier dolichol-pyrophosphate to an asparagine residue within an Asn-X-Ser/Thr consensus motif in nascent polypeptide chains, the first step in protein N-glycosylation. N-glycosylation occurs cotranslationally and the complex associates with the Sec61 complex at the channel-forming translocon complex that mediates protein translocation across the endoplasmic reticulum (ER). All subunits are required for a maximal enzyme activity. This chain is Oligosaccharyltransferase complex subunit ostc, found in Danio rerio (Zebrafish).